A 55-amino-acid polypeptide reads, in one-letter code: Sec-independent protein translocase protein TatA (55 aa).

Residues 1–21 (MFGELGVPEVLFILGIALLIF) form a helical membrane-spanning segment.

The protein belongs to the TatA/E family. As to quaternary structure, forms a complex with TatC.

It localises to the cell inner membrane. Its function is as follows. Part of the twin-arginine translocation (Tat) system that transports large folded proteins containing a characteristic twin-arginine motif in their signal peptide across membranes. TatA could form the protein-conducting channel of the Tat system. In Koribacter versatilis (strain Ellin345), this protein is Sec-independent protein translocase protein TatA.